Here is a 584-residue protein sequence, read N- to C-terminus: Major capsid protein (584 aa).

The protein belongs to the NCLDV major capsid protein family.

Its subcellular location is the virion. Major protein of the capsid. This chain is Major capsid protein (MCP), found in Haptolina ericina (CeV01).